A 36-amino-acid chain; its full sequence is Light-harvesting protein B-1015 gamma chain (36 aa).

One of the components of the bacteriochlorophyll-protein complex in the chromatophore membrane. The sequence is that of Light-harvesting protein B-1015 gamma chain from Blastochloris viridis (Rhodopseudomonas viridis).